The following is a 134-amino-acid chain: Phosphoribosyl-AMP cyclohydrolase (134 aa).

D77 provides a ligand contact to Mg(2+). C78 lines the Zn(2+) pocket. Mg(2+)-binding residues include D79 and D81. C95 and C102 together coordinate Zn(2+).

The protein belongs to the PRA-CH family. As to quaternary structure, homodimer. The cofactor is Mg(2+). Zn(2+) is required as a cofactor.

The protein localises to the cytoplasm. It catalyses the reaction 1-(5-phospho-beta-D-ribosyl)-5'-AMP + H2O = 1-(5-phospho-beta-D-ribosyl)-5-[(5-phospho-beta-D-ribosylamino)methylideneamino]imidazole-4-carboxamide. It participates in amino-acid biosynthesis; L-histidine biosynthesis; L-histidine from 5-phospho-alpha-D-ribose 1-diphosphate: step 3/9. Catalyzes the hydrolysis of the adenine ring of phosphoribosyl-AMP. The polypeptide is Phosphoribosyl-AMP cyclohydrolase (Pseudomonas paraeruginosa (strain DSM 24068 / PA7) (Pseudomonas aeruginosa (strain PA7))).